Consider the following 155-residue polypeptide: NADH-ubiquinone oxidoreductase chain 6 (155 aa).

Helical transmembrane passes span 10 to 30 (ILAIGLLSPVQSIVCLIVLFV), 43 to 63 (LMGILYVLIYVGAIAILFLFI), 75 to 95 (GTIHPLIFTILIICLIPLDLS), and 133 to 153 (AIPMILIGLILILSVIGAIAI).

Belongs to the complex I subunit 6 family.

It localises to the mitochondrion membrane. It carries out the reaction a ubiquinone + NADH + 5 H(+)(in) = a ubiquinol + NAD(+) + 4 H(+)(out). Functionally, core subunit of the mitochondrial membrane respiratory chain NADH dehydrogenase (Complex I) that is believed to belong to the minimal assembly required for catalysis. Complex I functions in the transfer of electrons from NADH to the respiratory chain. The immediate electron acceptor for the enzyme is believed to be ubiquinone. This is NADH-ubiquinone oxidoreductase chain 6 (ND6) from Candida parapsilosis (Yeast).